The chain runs to 115 residues: UPF0295 protein BPUM_0828 (115 aa).

2 consecutive transmembrane segments (helical) span residues 13–33 (TFAL…VFFK) and 41–61 (FFML…FWIG).

Belongs to the UPF0295 family.

The protein resides in the cell membrane. This Bacillus pumilus (strain SAFR-032) protein is UPF0295 protein BPUM_0828.